We begin with the raw amino-acid sequence, 266 residues long: N-acetyltransferase ECO1 (266 aa).

The CCHH-type zinc-finger motif lies at 31–55; sequence KKCTECQMSYIIDSPADCAEHKKYH. Positions 108 to 266 constitute an N-acetyltransferase domain; the sequence is TPGKTAEVKA…SGELLIPCYI (159 aa).

Belongs to the acetyltransferase family. ECO subfamily.

It localises to the nucleus. In terms of biological role, probable acetyltransferase required for the establishment of sister chromatid cohesion and couple the processes of cohesion and DNA replication to ensure that only sister chromatids become paired together. In contrast to the structural cohesins, the deposition and establishment factors are required only during S phase. Acts by acetylating the cohesin complex component SMC3. This Eremothecium gossypii (strain ATCC 10895 / CBS 109.51 / FGSC 9923 / NRRL Y-1056) (Yeast) protein is N-acetyltransferase ECO1 (ECO1).